The following is a 329-amino-acid chain: uncharacterized protein (329 aa).

Disordered stretches follow at residues 16 to 41 and 183 to 229; these read RCGY…SRIC and LENK…KFEP. Basic and acidic residues predominate over residues 213–229; it reads SNDKANRGEKGEAKFEP.

Expressed in testis and epididymis. Expressed at lower levels in ovary.

Functionally, dispensable for normal development and fertility. This is an uncharacterized protein from Mus musculus (Mouse).